The following is a 357-amino-acid chain: DNA integrity scanning protein DisA (357 aa).

In terms of domain architecture, DAC spans Val8–Ile146. ATP is bound by residues Gly75, Leu93, and Met106 to Thr110.

It belongs to the DisA family. In terms of assembly, homooctamer. Mg(2+) is required as a cofactor.

The enzyme catalyses 2 ATP = 3',3'-c-di-AMP + 2 diphosphate. Functionally, participates in a DNA-damage check-point that is active prior to asymmetric division when DNA is damaged. DisA forms globular foci that rapidly scan along the chromosomes during sporulation, searching for lesions. When a lesion is present, DisA pauses at the lesion site. This triggers a cellular response that culminates in a temporary block in sporulation initiation. Its function is as follows. Also has diadenylate cyclase activity, catalyzing the condensation of 2 ATP molecules into cyclic di-AMP (c-di-AMP). c-di-AMP acts as a signaling molecule that couples DNA integrity with progression of sporulation. The rise in c-di-AMP level generated by DisA while scanning the chromosome, operates as a positive signal that advances sporulation; upon encountering a lesion, the DisA focus arrests at the damaged site and halts c-di-AMP synthesis. The protein is DNA integrity scanning protein DisA of Bacillus cereus (strain G9842).